We begin with the raw amino-acid sequence, 349 residues long: Homeobox protein engrailed (349 aa).

Disordered regions lie at residues 26 to 53, 146 to 210, 228 to 252, and 327 to 349; these read DGPS…SPLS, GKET…PLPP, PSSG…EKRP, and STIP…ARIE. Basic and acidic residues-rich tracts occupy residues 173-188 and 242-252; these read QMKK…RTES and DKAITPDEKRP. Positions 249–308 form a DNA-binding region, homeobox; sequence EKRPRTAFTAEQLSRLKHEFNENRYLTERRRQDLARELGLHENQIKIWFQNNRAKLKKSS.

The protein belongs to the engrailed homeobox family.

Its subcellular location is the nucleus. The polypeptide is Homeobox protein engrailed (Artemia franciscana (Brine shrimp)).